Consider the following 143-residue polypeptide: Large ribosomal subunit protein uL11 (143 aa).

This sequence belongs to the universal ribosomal protein uL11 family. Part of the ribosomal stalk of the 50S ribosomal subunit. Interacts with L10 and the large rRNA to form the base of the stalk. L10 forms an elongated spine to which L12 dimers bind in a sequential fashion forming a multimeric L10(L12)X complex. One or more lysine residues are methylated.

In terms of biological role, forms part of the ribosomal stalk which helps the ribosome interact with GTP-bound translation factors. The polypeptide is Large ribosomal subunit protein uL11 (Ectopseudomonas mendocina (strain ymp) (Pseudomonas mendocina)).